Consider the following 261-residue polypeptide: Carbonic anhydrase 1 (261 aa).

Ala-2 carries the N-acetylalanine modification. The Alpha-carbonic anhydrase domain occupies 4–261 (PDWGYDDKNG…LKGRTVRASF (258 aa)). His-65 acts as the Proton donor/acceptor in catalysis. His-95, His-97, and His-120 together coordinate Zn(2+). Substrate is bound by residues Thr-200 and 200–201 (TH). The disordered stretch occupies residues 238–261 (NPVPIQRNNRPTQPLKGRTVRASF).

This sequence belongs to the alpha-carbonic anhydrase family. Zn(2+) is required as a cofactor.

Its subcellular location is the cytoplasm. It catalyses the reaction hydrogencarbonate + H(+) = CO2 + H2O. The enzyme catalyses urea = cyanamide + H2O. Inhibited by acetazolamide. Catalyzes the reversible hydration of carbon dioxide. Can hydrate cyanamide to urea. This chain is Carbonic anhydrase 1 (CA1), found in Macaca mulatta (Rhesus macaque).